A 157-amino-acid chain; its full sequence is 6,7-dimethyl-8-ribityllumazine synthase (157 aa).

5-amino-6-(D-ribitylamino)uracil contacts are provided by residues Phe22, 57-59 (AYE), and 81-83 (TVI). 86-87 (GT) serves as a coordination point for (2S)-2-hydroxy-3-oxobutyl phosphate. The Proton donor role is filled by His89. A 5-amino-6-(D-ribitylamino)uracil-binding site is contributed by Phe114. (2S)-2-hydroxy-3-oxobutyl phosphate is bound at residue Arg128.

Belongs to the DMRL synthase family. Forms an icosahedral capsid composed of 60 subunits, arranged as a dodecamer of pentamers.

The enzyme catalyses (2S)-2-hydroxy-3-oxobutyl phosphate + 5-amino-6-(D-ribitylamino)uracil = 6,7-dimethyl-8-(1-D-ribityl)lumazine + phosphate + 2 H2O + H(+). The protein operates within cofactor biosynthesis; riboflavin biosynthesis; riboflavin from 2-hydroxy-3-oxobutyl phosphate and 5-amino-6-(D-ribitylamino)uracil: step 1/2. In terms of biological role, catalyzes the formation of 6,7-dimethyl-8-ribityllumazine by condensation of 5-amino-6-(D-ribitylamino)uracil with 3,4-dihydroxy-2-butanone 4-phosphate. This is the penultimate step in the biosynthesis of riboflavin. This Haemophilus influenzae (strain ATCC 51907 / DSM 11121 / KW20 / Rd) protein is 6,7-dimethyl-8-ribityllumazine synthase.